A 278-amino-acid chain; its full sequence is Proline-rich 28 kDa antigen homolog (278 aa).

A signal peptide spans 1 to 28 (MIQSTQTWRVLAGGLAATAMGVTVFAGG).

This sequence to M.tuberculosis Rv0040c.

The polypeptide is Proline-rich 28 kDa antigen homolog (Mycobacterium leprae (strain TN)).